The sequence spans 763 residues: Phosphoglycerol transferase I (763 aa).

The next 4 membrane-spanning stretches (helical) occupy residues 1–21 (MSELLSVALFLASVLIYAWKA), 26–46 (WWFAATLTVLGLFVILNITLY), 77–97 (ILPGIGIALALVAVFGALGWV), and 108–128 (VGYSLLALLLALGSVDASPAF).

This sequence belongs to the OpgB family.

It localises to the cell inner membrane. The catalysed reaction is a phosphatidylglycerol + a membrane-derived-oligosaccharide D-glucose = a 1,2-diacyl-sn-glycerol + a membrane-derived-oligosaccharide 6-(glycerophospho)-D-glucose.. The protein operates within glycan metabolism; osmoregulated periplasmic glucan (OPG) biosynthesis. In terms of biological role, transfers a phosphoglycerol residue from phosphatidylglycerol to the membrane-bound nascent glucan backbones. The protein is Phosphoglycerol transferase I of Salmonella heidelberg (strain SL476).